A 350-amino-acid chain; its full sequence is Uroporphyrinogen decarboxylase (350 aa).

Residues 27–31 (RQAGR), phenylalanine 46, aspartate 76, tyrosine 152, serine 207, and histidine 321 contribute to the substrate site.

Belongs to the uroporphyrinogen decarboxylase family. As to quaternary structure, homodimer.

It localises to the cytoplasm. It catalyses the reaction uroporphyrinogen III + 4 H(+) = coproporphyrinogen III + 4 CO2. It participates in porphyrin-containing compound metabolism; protoporphyrin-IX biosynthesis; coproporphyrinogen-III from 5-aminolevulinate: step 4/4. Functionally, catalyzes the decarboxylation of four acetate groups of uroporphyrinogen-III to yield coproporphyrinogen-III. This is Uroporphyrinogen decarboxylase from Listeria innocua serovar 6a (strain ATCC BAA-680 / CLIP 11262).